Here is a 294-residue protein sequence, read N- to C-terminus: Putative lipid kinase SP_1045 (294 aa).

The DAGKc domain maps to 1–131 (MKKAMVIINP…IDIGKANDNY (131 aa)). Residues 9–13 (NPTSG), Thr40, 66–72 (GDGTVNE), and Thr93 each bind ATP. 2 residues coordinate Mg(2+): Asp212 and Tyr214. The active-site Proton acceptor is Asp269.

Belongs to the diacylglycerol/lipid kinase family. Mg(2+) is required as a cofactor.

Functionally, may catalyze the ATP-dependent phosphorylation of lipids other than diacylglycerol (DAG). In fact, is not able to exhibit diacylglycerol kinase activity in vitro. The chain is Putative lipid kinase SP_1045 from Streptococcus pneumoniae serotype 4 (strain ATCC BAA-334 / TIGR4).